A 279-amino-acid chain; its full sequence is 3-methyl-2-oxobutanoate hydroxymethyltransferase (279 aa).

Residues aspartate 43 and aspartate 82 each contribute to the Mg(2+) site. Residues 43-44 (DS), aspartate 82, and lysine 112 each bind 3-methyl-2-oxobutanoate. Mg(2+) is bound at residue glutamate 114. Catalysis depends on glutamate 181, which acts as the Proton acceptor.

It belongs to the PanB family. Homodecamer; pentamer of dimers. Mg(2+) serves as cofactor.

The protein resides in the cytoplasm. It carries out the reaction 3-methyl-2-oxobutanoate + (6R)-5,10-methylene-5,6,7,8-tetrahydrofolate + H2O = 2-dehydropantoate + (6S)-5,6,7,8-tetrahydrofolate. Its pathway is cofactor biosynthesis; (R)-pantothenate biosynthesis; (R)-pantoate from 3-methyl-2-oxobutanoate: step 1/2. Catalyzes the reversible reaction in which hydroxymethyl group from 5,10-methylenetetrahydrofolate is transferred onto alpha-ketoisovalerate to form ketopantoate. This chain is 3-methyl-2-oxobutanoate hydroxymethyltransferase, found in Geobacillus thermodenitrificans (strain NG80-2).